A 269-amino-acid polypeptide reads, in one-letter code: Phosphonates import ATP-binding protein PhnC (269 aa).

Residues 8–251 (IHLYGASLRH…LLDALYANEQ (244 aa)) enclose the ABC transporter domain. 40–47 (GPSGAGKS) serves as a coordination point for ATP.

The protein belongs to the ABC transporter superfamily. Phosphonates importer (TC 3.A.1.9.1) family. The complex is composed of two ATP-binding proteins (PhnC), two transmembrane proteins (PhnE) and a solute-binding protein (PhnD).

Its subcellular location is the cell inner membrane. It catalyses the reaction phosphonate(out) + ATP + H2O = phosphonate(in) + ADP + phosphate + H(+). In terms of biological role, part of the ABC transporter complex PhnCDE involved in phosphonates import. Responsible for energy coupling to the transport system. The chain is Phosphonates import ATP-binding protein PhnC from Pseudomonas putida (strain ATCC 47054 / DSM 6125 / CFBP 8728 / NCIMB 11950 / KT2440).